We begin with the raw amino-acid sequence, 534 residues long: MTQAEIKLCSLLLQEHFGEIVEKIGVHLIRTGSQPLRVIAHDTGTSLDQVKKALCVLVQHNLVSYQVHKRGVVEYEAQCSRVLRMLRYPRYIYTTKTLYSDTGELIVEELLLNGKLTMSAVVKKVADRLTETMEDGKTMDYAEVSNTFVRLADTHFVQRCPSVPTTENSDPGPPPPAPTLVINEKDMYLVPKLSLIGKGKRRRSSDEDAAGEPKAKRPKYTTDNKEPIPDDGIYWQANLDRFHQHFRDQAIVSAVANRMDQTSSEIVRTMLRMSEITTSSSAPFTQPLSSNEIFRSLPVGYNISKQVLDQYLTLLADDPLEFVGKSGDSGGGMYVINLHKALASLATATLESVVQERFGSRCARIFRLVLQKKHIEQKQVEDFAMIPAKEAKDMLYKMLSENFMSLQEIPKTPDHAPSRTFYLYTVNILSAARMLLHRCYKSIANLIERRQFETKENKRLLEKSQRVEAIIASMQATGAEEAQLQEIEEMITAPERQQLETLKRNVNKLDASEIQVDETIFLLESYIECTMKRQ.

A disordered region spans residues 161 to 181; sequence PSVPTTENSDPGPPPPAPTLV. Serine 194 bears the Phosphoserine mark. The tract at residues 197-228 is disordered; that stretch reads GKGKRRRSSDEDAAGEPKAKRPKYTTDNKEPI. Residues 211–228 are compositionally biased toward basic and acidic residues; sequence GEPKAKRPKYTTDNKEPI.

It belongs to the eukaryotic RPC3/POLR3C RNA polymerase subunit family. In terms of assembly, component of the RNA polymerase III complex consisting of 17 subunits: a ten-subunit horseshoe-shaped catalytic core composed of POLR3A/RPC1, POLR3B/RPC2, POLR1C/RPAC1, POLR1D/RPAC2, POLR3K/RPC10, POLR2E/RPABC1, POLR2F/RPABC2, POLR2H/RPABC3, POLR2K/RPABC4 and POLR2L/RPABC5; a mobile stalk composed of two subunits POLR3H/RPC8 and CRCP/RPC9, protruding from the core and functioning primarily in transcription initiation; and additional subunits homologous to general transcription factors of the RNA polymerase II machinery, POLR3C/RPC3-POLR3F/RPC6-POLR3G/RPC7 heterotrimer required for transcription initiation and POLR3D/RPC4-POLR3E/RPC5 heterodimer involved in both transcription initiation and termination. Directly interacts with POLR3G/RPC7 and POLR3GL. Directly interacts with POLR3F/RPC6. Interacts with GTF3C4. As part of the RNA polymerase III complex, interacts with PKP2.

It localises to the nucleus. DNA-dependent RNA polymerase catalyzes the transcription of DNA into RNA using the four ribonucleoside triphosphates as substrates. Specific peripheric component of RNA polymerase III (Pol III) which synthesizes small non-coding RNAs including 5S rRNA, snRNAs, tRNAs and miRNAs from at least 500 distinct genomic loci. Part of POLR3C/RPC3-POLR3F/RPC6-POLR3G/RPC7 heterotrimer, coordinates the dynamics of Pol III stalk and clamp modules during the transition from apo to elongation state. Pol III plays a key role in sensing and limiting infection by intracellular bacteria and DNA viruses. Acts as a nuclear and cytosolic DNA sensor involved in innate immune response. Can sense non-self dsDNA that serves as template for transcription into dsRNA. The non-self RNA polymerase III transcripts, such as Epstein-Barr virus-encoded RNAs (EBERs) induce type I interferon and NF-kappa-B through the RIG-I pathway. Preferentially binds single-stranded DNA (ssDNA) in a sequence-independent manner. The protein is DNA-directed RNA polymerase III subunit RPC3 of Homo sapiens (Human).